Consider the following 65-residue polypeptide: Large ribosomal subunit protein bL28 (65 aa).

The protein belongs to the bacterial ribosomal protein bL28 family.

The protein is Large ribosomal subunit protein bL28 of Pseudothermotoga lettingae (strain ATCC BAA-301 / DSM 14385 / NBRC 107922 / TMO) (Thermotoga lettingae).